Here is a 436-residue protein sequence, read N- to C-terminus: ATP-dependent protease ATPase subunit HslU (436 aa).

ATP-binding positions include isoleucine 18, glycine 60 to glutamate 65, aspartate 250, glutamate 314, and arginine 386.

Belongs to the ClpX chaperone family. HslU subfamily. A double ring-shaped homohexamer of HslV is capped on each side by a ring-shaped HslU homohexamer. The assembly of the HslU/HslV complex is dependent on binding of ATP.

The protein resides in the cytoplasm. ATPase subunit of a proteasome-like degradation complex; this subunit has chaperone activity. The binding of ATP and its subsequent hydrolysis by HslU are essential for unfolding of protein substrates subsequently hydrolyzed by HslV. HslU recognizes the N-terminal part of its protein substrates and unfolds these before they are guided to HslV for hydrolysis. The polypeptide is ATP-dependent protease ATPase subunit HslU (Mesorhizobium japonicum (strain LMG 29417 / CECT 9101 / MAFF 303099) (Mesorhizobium loti (strain MAFF 303099))).